A 94-amino-acid polypeptide reads, in one-letter code: uncharacterized protein (94 aa).

Positions 1-26 (MNDQRDQAVPWATGLAVAGFVAAVIA) are cleaved as a signal peptide. Helical transmembrane passes span 42-62 (LLAV…LWGW) and 71-91 (FVLG…ALTL).

The protein localises to the cell membrane. This is an uncharacterized protein from Mycobacterium tuberculosis (strain CDC 1551 / Oshkosh).